The chain runs to 118 residues: Large ribosomal subunit protein uL18 (118 aa).

This sequence belongs to the universal ribosomal protein uL18 family. As to quaternary structure, part of the 50S ribosomal subunit; part of the 5S rRNA/L5/L18/L25 subcomplex. Contacts the 5S and 23S rRNAs.

Its function is as follows. This is one of the proteins that bind and probably mediate the attachment of the 5S RNA into the large ribosomal subunit, where it forms part of the central protuberance. The sequence is that of Large ribosomal subunit protein uL18 from Helicobacter pylori (strain J99 / ATCC 700824) (Campylobacter pylori J99).